Here is a 387-residue protein sequence, read N- to C-terminus: S-adenosylmethionine synthase (387 aa).

His-19 is a binding site for ATP. Mg(2+) is bound at residue Asp-21. A K(+)-binding site is contributed by Glu-47. Residue Gln-103 coordinates L-methionine. The flexible loop stretch occupies residues Gln-103–Leu-113. Residues Asp-167–Lys-169, Arg-233–Phe-234, Asp-242, Arg-248–Lys-249, Ala-265, and Lys-269 contribute to the ATP site. Residue Asp-242 coordinates L-methionine. Position 273 (Lys-273) interacts with L-methionine.

This sequence belongs to the AdoMet synthase family. In terms of assembly, homotetramer; dimer of dimers. The cofactor is Mg(2+). K(+) serves as cofactor.

It localises to the cytoplasm. It catalyses the reaction L-methionine + ATP + H2O = S-adenosyl-L-methionine + phosphate + diphosphate. The protein operates within amino-acid biosynthesis; S-adenosyl-L-methionine biosynthesis; S-adenosyl-L-methionine from L-methionine: step 1/1. Functionally, catalyzes the formation of S-adenosylmethionine (AdoMet) from methionine and ATP. The overall synthetic reaction is composed of two sequential steps, AdoMet formation and the subsequent tripolyphosphate hydrolysis which occurs prior to release of AdoMet from the enzyme. This is S-adenosylmethionine synthase from Mycoplasma mycoides subsp. mycoides SC (strain CCUG 32753 / NCTC 10114 / PG1).